The chain runs to 420 residues: Serine hydroxymethyltransferase (420 aa).

Residues Leu118 and 122–124 each bind (6S)-5,6,7,8-tetrahydrofolate; that span reads GHL. The residue at position 227 (Lys227) is an N6-(pyridoxal phosphate)lysine.

This sequence belongs to the SHMT family. Homodimer. Pyridoxal 5'-phosphate serves as cofactor.

It is found in the cytoplasm. The enzyme catalyses (6R)-5,10-methylene-5,6,7,8-tetrahydrofolate + glycine + H2O = (6S)-5,6,7,8-tetrahydrofolate + L-serine. Its pathway is one-carbon metabolism; tetrahydrofolate interconversion. The protein operates within amino-acid biosynthesis; glycine biosynthesis; glycine from L-serine: step 1/1. Functionally, catalyzes the reversible interconversion of serine and glycine with tetrahydrofolate (THF) serving as the one-carbon carrier. This reaction serves as the major source of one-carbon groups required for the biosynthesis of purines, thymidylate, methionine, and other important biomolecules. Also exhibits THF-independent aldolase activity toward beta-hydroxyamino acids, producing glycine and aldehydes, via a retro-aldol mechanism. This chain is Serine hydroxymethyltransferase, found in Persephonella marina (strain DSM 14350 / EX-H1).